Reading from the N-terminus, the 517-residue chain is Carotenoid phi-ring synthase (517 aa).

Residues 1-24 (MFARDSGRGHRHGRDRQAAVVPAP) form a disordered region. Residues alanine 45, 64–65 (ER), arginine 72, tyrosine 99, aspartate 461, and methionine 472 contribute to the FAD site.

The protein belongs to the carotenoid/retinoid oxidoreductase family. It depends on FAD as a cofactor.

It catalyses the reaction a carotenoid beta-end derivative + 2 A = a carotenoid phi-end derivative + 2 AH2. It participates in carotenoid biosynthesis. In terms of biological role, involved in the biosynthesis of isorenieratene, a carotenoid with aromatic end groups. Catalyzes the introduction of two additional double bonds into each ionone ring of beta-carotene to produce isorenieratene. The reaction includes an intramolecular methyl transfer from position C1 to position C2 of the ring. The polypeptide is Carotenoid phi-ring synthase (Streptomyces griseus).